The chain runs to 467 residues: Mothers against decapentaplegic homolog 2 (467 aa).

The residue at position 2 (S2) is an N-acetylserine. Residue T8 is modified to Phosphothreonine; by MAPK3. In terms of domain architecture, MH1 spans 10-176 (PVVKRLLGWK…YQRVETPVLP (167 aa)). The residue at position 19 (K19) is an N6-acetyllysine. Zn(2+)-binding residues include C74, C149, C161, and H166. Residues 207–217 (PAGIEPQSNYI) show a composition bias toward polar residues. Residues 207–251 (PAGIEPQSNYIPETPPPGYISEDGETSDQQLNQSMDTGSPAELSP) form a disordered region. T220 is subject to Phosphothreonine. The short motif at 221–225 (PPPGY) is the PY-motif element. Residues 233–243 (SDQQLNQSMDT) are compositionally biased toward polar residues. Phosphoserine; by CAMK2 is present on S240. Residues S245, S250, S255, S458, S460, and S464 each carry the phosphoserine modification. Residues 274 to 467 (WCSIAYYELN…SPSVRCSSMS (194 aa)) enclose the MH2 domain. Phosphoserine; by TGFBR1 is present on residues S465 and S467.

Belongs to the dwarfin/SMAD family. Monomer; in the absence of TGF-beta. Heterodimer; in the presence of TGF-beta. Forms a heterodimer with co-SMAD, SMAD4, in the nucleus to form the transactivation complex SMAD2/SMAD4. Found in a complex with SMAD3 and TRIM33 upon addition of TGF-beta. Identified in a complex that contains at least ZNF451, SMAD2, SMAD3 and SMAD4. Interacts (via the MH2 domain) with ZFYVE9; may form trimers with the SMAD4 co-SMAD. Interacts with TAZ/WWRT1. Interacts with FOXH1. Interacts with SNW1. Interacts with CREB-binding protein (CBP) and EP300. Interacts with SNON. Interacts with ALK4/ACVR1B. Interacts with SKOR1. Interacts with SKOR2. Interacts with PRDM16. Interacts (via MH2 domain) with LEMD3. Interacts with RBPMS. Interacts with WWP1. Interacts (dephosphorylated form, via the MH1 and MH2 domains) with RANBP3 (via its C-terminal R domain); the interaction results in the export of dephosphorylated SMAD3 out of the nucleus and termination of the TGF-beta signaling. Interacts with PDPK1 (via PH domain). Interacts with DAB2; the interactions are enhanced upon TGF-beta stimulation. Interacts with USP15. Interacts with PPP5C. Interacts with LDLRAD4 (via the SMAD interaction motif). Interacts (via MH2 domain) with PMEPA1 (via the SMAD interaction motif). Interacts with ZFHX3. Interacts with ZNF451. Interacts with SMURF2 when phosphorylated on Ser-465/467. Interacts with PPM1A. Interacts with TGF-beta. Interacts with TGFBR1. Interacts with TGIF. Interacts with SMAD3 and TRIM33. Interacts with ZNF580. Interacts with NEDD4L in response to TGF-beta. Interacts with HGS. Interacts with AIP1. Interacts with WWP1. Interacts with PML. Interacts weakly with ZNF8. Interacts (when phosphorylated) with RNF111; RNF111 acts as an enhancer of the transcriptional responses by mediating ubiquitination and degradation of SMAD2 inhibitors. Interacts with YAP1 (when phosphorylated at 'Ser-127'). Interacts when phosphorylated with IPO7; the interaction facilitates translocation of SMAD2 to the nucleus. Interacts with MTMR4; negatively regulates TGF-beta signaling through SMAD2 dephosphorylation and retention in endosomes. Phosphorylated on one or several of Thr-220, Ser-245, Ser-250, and Ser-255. In response to TGF-beta, phosphorylated on Ser-465/467 by TGF-beta and activin type 1 receptor kinases. TGF-beta-induced Ser-465/467 phosphorylation declines progressively in a KMT5A-dependent manner. Able to interact with SMURF2 when phosphorylated on Ser-465/467, recruiting other proteins, such as SNON, for degradation. In response to decorin, the naturally occurring inhibitor of TGF-beta signaling, phosphorylated on Ser-240 by CaMK2. Phosphorylated by MAPK3 upon EGF stimulation; which increases transcriptional activity and stability, and is blocked by calmodulin. Phosphorylated by PDPK1. Post-translationally, in response to TGF-beta, ubiquitinated by NEDD4L; which promotes its degradation. Monoubiquitinated, leading to prevent DNA-binding. Deubiquitination by USP15 alleviates inhibition and promotes activation of TGF-beta target genes. Ubiquitinated by RNF111, leading to its degradation: only SMAD2 proteins that are 'in use' are targeted by RNF111, RNF111 playing a key role in activating SMAD2 and regulating its turnover. In terms of processing, acetylated on Lys-19 by coactivators in response to TGF-beta signaling, which increases transcriptional activity. Isoform short: Acetylation increases DNA binding activity in vitro and enhances its association with target promoters in vivo. Acetylation in the nucleus by EP300 is enhanced by TGF-beta. As to expression, expressed at high levels in skeletal muscle, endothelial cells, heart and placenta.

It is found in the cytoplasm. It localises to the nucleus. In terms of biological role, receptor-regulated SMAD (R-SMAD) that is an intracellular signal transducer and transcriptional modulator activated by TGF-beta (transforming growth factor) and activin type 1 receptor kinases. Binds the TRE element in the promoter region of many genes that are regulated by TGF-beta and, on formation of the SMAD2/SMAD4 complex, activates transcription. Promotes TGFB1-mediated transcription of odontoblastic differentiation genes in dental papilla cells. Positively regulates PDPK1 kinase activity by stimulating its dissociation from the 14-3-3 protein YWHAQ which acts as a negative regulator. May act as a tumor suppressor in colorectal carcinoma. The sequence is that of Mothers against decapentaplegic homolog 2 (SMAD2) from Homo sapiens (Human).